The chain runs to 45 residues: Putative purine permease 9 (45 aa).

Not detected in seedlings, leaves, embryos or root and shoot meristems.

This chain is Putative purine permease 9, found in Arabidopsis thaliana (Mouse-ear cress).